The sequence spans 1154 residues: MEPSDSASTAMEEPDSLEVLVKTLDSQTRTFIVGAQMNVKEFKEHIAASVSIPSEKQRLIYQGRVLQDDKKLQEYNVGGKVIHLVERAPPQTQLPSGASSGTGSASATHGGAPLPGTRGPGASVHDRNANSYVMVGTFNLPSDGSAVDVHINMEQAPIQSEPRVRLVMAQHMIRDIQTLLSRMECRGGTQAQASQPPPQTPQTVASETVALNSQTSEPVESEAPPREPMESEEMEERPPTQTPELAPSGPAPAGPAPAGPAPAPETNAPNHPSPAEHVEVLQELQRLQRRLQPFLQRYCEVLGAAATTDYNNNHEGREEDQRLINLVGESLRLLGNTFVALSDLRCNLACAPPRHLHVVRPMSHYTTPMVLQQAAIPIQINVGTTVTMTGNGARPPPAPGAEAATPGSAQATSLPPSSTTVDSSTEGAPPPGPAPPPASSHPRVIRISHQSVEPVVMMHMNIQDSGAQPGGVPSAPTGPLGPPGHGQTLGQQVPGFPTAPTRVVIARPTPPQARPSHPGGPPVSGALQGAGLGTNTSLAQMVSGLVGQLLMQPVLVAQGTPGMAQAQAQAQAQAQAQAQAPAPAPAPAPAPATASASAGTTNTATTAGPAPGGPAQPPPPQPSAADLQFSQLLGNLLGPAGPGAGGPGMASPTITVAMPGVPAFLQGMTDFLQASQTAPPPPPPPPPPPPAPEQQSTPPPGSPSGGTASPGGLGPESLPPEFFTSVVQGVLSSLLGSLGARAGSSESIAAFIQRLSGSSNIFEPGADGALGFFGALLSLLCQNFSMVDVVMLLHGHFQPLQRLQPQLRSFFHQHYLGGQEPTPSNIRMATHTLITGLEEYVRESFSLVQVQPGVDIIRTNLEFLQEQFNSIAAHVLHCTDSGFGARLLELCNQGLFECLALNLHCLGGQQMELAAVINGRIRRMSRGVNPSLVSWLTTMMGLRLQVVLEHMPVGPDAILRYVRRVGDPPQTLPEEPMEVQGAERTSPEPQRENASPAPGTTAEEAMSRGPPPAPEGGSRDEQDGASADAEPWAAAVPPEWVPIIQQDIQSQRKVKPQPPLSDAYLSGMPAKRRKTMQGEGPQLLLSEAVSRAAKAAGARPLTSPESLSRDLEAPEVQESYRQQLRSDIQKRLQEDPNYSPQRFPNAHRAFADDP.

At Met1 the chain carries N-acetylmethionine. Positions 17–92 constitute a Ubiquitin-like domain; sequence LEVLVKTLDS…HLVERAPPQT (76 aa). Disordered stretches follow at residues 87 to 125, 186 to 274, 387 to 442, 463 to 531, and 568 to 626; these read RAPP…ASVH, RGGT…HPSP, TMTG…SSHP, QDSG…QGAG, and AQAQ…SAAD. Phosphoserine is present on Ser96. A compositionally biased stretch (low complexity) spans 96–112; the sequence is SGASSGTGSASATHGGA. Thr117 is subject to Phosphothreonine. The span at 209-218 shows a compositional bias: polar residues; it reads VALNSQTSEP. Residues 237–271 form repeat 1; sequence RPPTQTPELAPSGPAPAGPAPAGPAPAPETNAPNH. The interval 237–658 is 4 X 29 AA approximate repeats; it reads RPPTQTPELA…MASPTITVAM (422 aa). The span at 249-263 shows a compositional bias: pro residues; the sequence is GPAPAGPAPAGPAPA. A compositionally biased stretch (low complexity) spans 400–409; it reads GAEAATPGSA. Over residues 410 to 426 the composition is skewed to polar residues; sequence QATSLPPSSTTVDSSTE. The stretch at 416–444 is repeat 2; it reads PSSTTVDSSTEGAPPPGPAPPPASSHPRV. Composition is skewed to pro residues over residues 428–439 and 508–521; these read APPPGPAPPPAS and PTPP…PGGP. Low complexity-rich tracts occupy residues 568–581 and 591–609; these read AQAQ…AQAP and PATA…TAGP. A run of 2 repeats spans residues 597 to 624 and 630 to 658. The segment covering 611–622 has biased composition (pro residues); sequence PGGPAQPPPPQP. 2 disordered regions span residues 673-719 and 968-1154; these read QASQ…ESLP and PPQT…ADDP. The span at 678–702 shows a compositional bias: pro residues; that stretch reads APPPPPPPPPPPPAPEQQSTPPPGS. Ser986 and Ser995 each carry phosphoserine. The span at 1029-1042 shows a compositional bias: low complexity; that stretch reads AEPWAAAVPPEWVP. The required for interaction with GET4 stretch occupies residues 1032–1062; sequence WAAAVPPEWVPIIQQDIQSQRKVKPQPPLSD. The short motif at 1034-1076 is the Nuclear localization site element; sequence AAVPPEWVPIIQQDIQSQRKVKPQPPLSDAYLSGMPAKRRKTM. The segment at 1044–1154 is sufficient for the delivery of client proteins to the endoplasmic reticulum; it reads IQQDIQSQRK…NAHRAFADDP (111 aa). Thr1075 is modified (phosphothreonine). The interval 1080–1137 is BAG-similar domain, required and sufficient for interaction with UBL4A; it reads GPQLLLSEAVSRAAKAAGARPLTSPESLSRDLEAPEVQESYRQQLRSDIQKRLQEDPN. The span at 1088–1098 shows a compositional bias: low complexity; it reads AVSRAAKAAGA. Phosphoserine occurs at positions 1103 and 1139.

Component of the BAG6/BAT3 complex, also named BAT3 complex, at least composed of BAG6, UBL4A and GET4/TRC35. Interacts with GET4; the interaction is direct and localizes BAG6 in the cytosol. Interacts with UBL4A; the interaction is direct and required for UBL4A protein stability. Interacts with AIFM1. Interacts with HSPA2. Interacts with CTCFL. Interacts with p300/EP300. Interacts (via ubiquitin-like domain) with RNF126; required for BAG6-dependent ubiquitination of proteins mislocalized to the cytosol. Interacts (via ubiquitin-like domain) with SGTA; SGTA competes with RNF126 by binding the same region of BAG6, thereby promoting deubiquitination of BAG6-target proteins and rescuing them from degradation. Interacts with ricin A chain. Interacts with VCP and AMFR; both form the VCP/p97-AMFR/gp78 complex. Interacts with SYVN1. Interacts with USP13; the interaction is direct and may mediate UBL4A deubiquitination. Interacts with ZFAND2B. Interacts with KPNA2. Interacts with UBQLN4. In terms of processing, ricin can induce a cleavage by the caspase CASP3. The released C-terminal peptide induces apoptosis.

The protein resides in the cytoplasm. It localises to the cytosol. The protein localises to the nucleus. It is found in the secreted. Its subcellular location is the extracellular exosome. Functionally, ATP-independent molecular chaperone preventing the aggregation of misfolded and hydrophobic patches-containing proteins. Functions as part of a cytosolic protein quality control complex, the BAG6/BAT3 complex, which maintains these client proteins in a soluble state and participates in their proper delivery to the endoplasmic reticulum or alternatively can promote their sorting to the proteasome where they undergo degradation. The BAG6/BAT3 complex is involved in the post-translational delivery of tail-anchored/type II transmembrane proteins to the endoplasmic reticulum membrane. Recruited to ribosomes, it interacts with the transmembrane region of newly synthesized tail-anchored proteins and together with SGTA and ASNA1 mediates their delivery to the endoplasmic reticulum. Client proteins that cannot be properly delivered to the endoplasmic reticulum are ubiquitinated by RNF126, an E3 ubiquitin-protein ligase associated with BAG6 and are sorted to the proteasome. SGTA which prevents the recruitment of RNF126 to BAG6 may negatively regulate the ubiquitination and the proteasomal degradation of client proteins. Similarly, the BAG6/BAT3 complex also functions as a sorting platform for proteins of the secretory pathway that are mislocalized to the cytosol either delivering them to the proteasome for degradation or to the endoplasmic reticulum. The BAG6/BAT3 complex also plays a role in the endoplasmic reticulum-associated degradation (ERAD), a quality control mechanism that eliminates unwanted proteins of the endoplasmic reticulum through their retrotranslocation to the cytosol and their targeting to the proteasome. It maintains these retrotranslocated proteins in an unfolded yet soluble state condition in the cytosol to ensure their proper delivery to the proteasome. BAG6 is also required for selective ubiquitin-mediated degradation of defective nascent chain polypeptides by the proteasome. In this context, it may participate in the production of antigenic peptides and play a role in antigen presentation in immune response. BAG6 is also involved in endoplasmic reticulum stress-induced pre-emptive quality control, a mechanism that selectively attenuates the translocation of newly synthesized proteins into the endoplasmic reticulum and reroutes them to the cytosol for proteasomal degradation. BAG6 may ensure the proper degradation of these proteins and thereby protects the endoplasmic reticulum from protein overload upon stress. By inhibiting the polyubiquitination and subsequent proteasomal degradation of HSPA2 it may also play a role in the assembly of the synaptonemal complex during spermatogenesis. Also positively regulates apoptosis by interacting with and stabilizing the proapoptotic factor AIFM1. By controlling the steady-state expression of the IGF1R receptor, indirectly regulates the insulin-like growth factor receptor signaling pathway. Its function is as follows. Involved in DNA damage-induced apoptosis: following DNA damage, accumulates in the nucleus and forms a complex with p300/EP300, enhancing p300/EP300-mediated p53/TP53 acetylation leading to increase p53/TP53 transcriptional activity. When nuclear, may also act as a component of some chromatin regulator complex that regulates histone 3 'Lys-4' dimethylation (H3K4me2). In terms of biological role, released extracellularly via exosomes, it is a ligand of the natural killer/NK cells receptor NCR3 and stimulates NK cells cytotoxicity. It may thereby trigger NK cells cytotoxicity against neighboring tumor cells and immature myeloid dendritic cells (DC). May mediate ricin-induced apoptosis. This chain is Large proline-rich protein BAG6, found in Mus musculus (Mouse).